Consider the following 466-residue polypeptide: Alpha-1A adrenergic receptor (466 aa).

The Extracellular segment spans residues 1–25 (MVFLSGNASDSSNCTQPPAPVNIPK). Asn7 and Asn13 each carry an N-linked (GlcNAc...) asparagine glycan. A helical transmembrane segment spans residues 26 to 51 (AILLGVILGVLILFGVPGNILVILSV). The Cytoplasmic portion of the chain corresponds to 52–63 (ACHRHLHSVTHY). Residues 64 to 89 (YIVNLAVADLLLTSTVLPFSAIFEIL) traverse the membrane as a helical segment. The Extracellular portion of the chain corresponds to 90-99 (GYWAFGRVFC). A helical transmembrane segment spans residues 100 to 122 (NIWAAVDVLCCTASIMSLCIISI). Over 123–143 (DRYIGVSYPLRYPTIVTQRRG) the chain is Cytoplasmic. The chain crosses the membrane as a helical span at residues 144–168 (LRALLCLWALSLVISIGPLFGWRQP). Residues 169–181 (APQDETICQINED) are Extracellular-facing. The helical transmembrane segment at 182 to 205 (PSYVLFSALGSFYVPLAIILVMYC) threads the bilayer. The Cytoplasmic segment spans residues 206 to 272 (RVYVVAKRES…KFSREKKAAK (67 aa)). A helical transmembrane segment spans residues 273 to 297 (TLGIVVGCFVLCWLPFFLVMPIGSF). At 298–304 (FPDFKPS) the chain is on the extracellular side. Residues 305–329 (ETVFKIVFWLGYLNSCINPIIYPCS) traverse the membrane as a helical segment. Over 330–466 (SQEFKKAFQN…ISLSENGEEV (137 aa)) the chain is Cytoplasmic. Residues 334–349 (KKAFQNVLKIQCLRRK) carry the Nuclear localization signal motif. Cys345 carries S-palmitoyl cysteine lipidation.

It belongs to the G-protein coupled receptor 1 family. Adrenergic receptor subfamily. ADRA1A sub-subfamily. As to quaternary structure, homo- and heterooligomer. Heterooligomerizes with ADRA1B homooligomers in cardiac myocytes. Interacts with CAVIN4.

It is found in the nucleus membrane. The protein resides in the cell membrane. The protein localises to the cytoplasm. It localises to the membrane. Its subcellular location is the caveola. In terms of biological role, this alpha-adrenergic receptor mediates its action by association with G proteins that activate a phosphatidylinositol-calcium second messenger system. Its effect is mediated by G(q) and G(11) proteins. Nuclear ADRA1A-ADRA1B heterooligomers regulate phenylephrine (PE)-stimulated ERK signaling in cardiac myocytes. The protein is Alpha-1A adrenergic receptor (ADRA1A) of Cavia porcellus (Guinea pig).